Here is a 369-residue protein sequence, read N- to C-terminus: DNA replication and repair protein RecF (369 aa).

30–37 is a binding site for ATP; it reads GRNAQGKT.

Belongs to the RecF family.

It is found in the cytoplasm. Functionally, the RecF protein is involved in DNA metabolism; it is required for DNA replication and normal SOS inducibility. RecF binds preferentially to single-stranded, linear DNA. It also seems to bind ATP. The sequence is that of DNA replication and repair protein RecF from Streptococcus agalactiae serotype III (strain NEM316).